The primary structure comprises 127 residues: Phosphoribosyl-ATP pyrophosphatase (127 aa).

The protein belongs to the PRA-PH family.

It localises to the cytoplasm. It carries out the reaction 1-(5-phospho-beta-D-ribosyl)-ATP + H2O = 1-(5-phospho-beta-D-ribosyl)-5'-AMP + diphosphate + H(+). It participates in amino-acid biosynthesis; L-histidine biosynthesis; L-histidine from 5-phospho-alpha-D-ribose 1-diphosphate: step 2/9. The protein is Phosphoribosyl-ATP pyrophosphatase of Polaromonas sp. (strain JS666 / ATCC BAA-500).